The following is a 210-amino-acid chain: Pyridoxine/pyridoxamine 5'-phosphate oxidase (210 aa).

Residues 7–10 (REDY) and Lys65 each bind substrate. FMN-binding positions include 60-65 (RMVLLK), 75-76 (FT), Arg81, Lys82, and Gln104. Residues Tyr122, Arg126, and Ser130 each coordinate substrate. FMN-binding positions include 139 to 140 (QS) and Trp183. 189–191 (RLH) provides a ligand contact to substrate. Arg193 is an FMN binding site.

Belongs to the pyridoxamine 5'-phosphate oxidase family. In terms of assembly, homodimer. FMN serves as cofactor.

It carries out the reaction pyridoxamine 5'-phosphate + O2 + H2O = pyridoxal 5'-phosphate + H2O2 + NH4(+). The catalysed reaction is pyridoxine 5'-phosphate + O2 = pyridoxal 5'-phosphate + H2O2. It functions in the pathway cofactor metabolism; pyridoxal 5'-phosphate salvage; pyridoxal 5'-phosphate from pyridoxamine 5'-phosphate: step 1/1. It participates in cofactor metabolism; pyridoxal 5'-phosphate salvage; pyridoxal 5'-phosphate from pyridoxine 5'-phosphate: step 1/1. Its function is as follows. Catalyzes the oxidation of either pyridoxine 5'-phosphate (PNP) or pyridoxamine 5'-phosphate (PMP) into pyridoxal 5'-phosphate (PLP). The polypeptide is Pyridoxine/pyridoxamine 5'-phosphate oxidase (Neisseria meningitidis serogroup A / serotype 4A (strain DSM 15465 / Z2491)).